The primary structure comprises 238 residues: Ribosomal RNA small subunit methyltransferase G (238 aa).

Residues Gly77, Phe82, 128–129 (AE), and Arg147 contribute to the S-adenosyl-L-methionine site. Residues 219-238 (RQTPKKYPRKAGLPNKEPIE) form a disordered region.

Belongs to the methyltransferase superfamily. RNA methyltransferase RsmG family.

The protein resides in the cytoplasm. Functionally, specifically methylates the N7 position of guanine in position 535 of 16S rRNA. The protein is Ribosomal RNA small subunit methyltransferase G of Oceanobacillus iheyensis (strain DSM 14371 / CIP 107618 / JCM 11309 / KCTC 3954 / HTE831).